Here is a 473-residue protein sequence, read N- to C-terminus: Spliceosome-associated protein CWC27 homolog (473 aa).

Serine 2 is modified (N-acetylserine). Residues 11-166 form the PPIase cyclophilin-type domain; sequence TNGKVLLKTT…NPHKIKSCEV (156 aa). Basic and acidic residues predominate over residues 177–193; it reads REIKRPKKEKPEEEVKK. Disordered regions lie at residues 177–386 and 399–473; these read REIK…EDQT and QAIA…KERR. Positions 206–230 form a coiled coil; sequence SFGEEAEEEEEEVNRVSQSMKGKSK. Residues 231–241 show a composition bias toward basic and acidic residues; it reads SSHDLLKDDPH. Positions 257–266 are enriched in acidic residues; that stretch reads GDLDDGGEGE. 3 stretches are compositionally biased toward basic and acidic residues: residues 267–287, 305–348, and 360–372; these read SAEHDEYIDGDEKNLMRERIA, EVEK…KRSE, and EYRREKQKYEALR. Residues 305-378 adopt a coiled-coil conformation; that stretch reads EVEKKSVNRS…EALRKQQSKK (74 aa). Serine 347 carries the post-translational modification Phosphoserine. Residues 405-419 show a composition bias toward acidic residues; it reads PENDIPETEVEDDEG. 2 stretches are compositionally biased toward basic and acidic residues: residues 426-438 and 458-473; these read QFEDKSRKVKDAS and RREESKKLMREKKERR.

It belongs to the cyclophilin-type PPIase family. Part of the activated spliceosome B/catalytic step 1 spliceosome, one of the forms of the spliceosome which has a well-formed active site but still cannot catalyze the branching reaction and is composed at least of 52 proteins, the U2, U5 and U6 snRNAs and the pre-mRNA. Recruited during early steps of activated spliceosome B maturation, it is probably one of the first proteins released from this complex as he matures to the spliceosome C complex. Component of the minor spliceosome, which splices U12-type introns.

Its subcellular location is the nucleus. Functionally, as part of the spliceosome, plays a role in pre-mRNA splicing. Probable inactive PPIase with no peptidyl-prolyl cis-trans isomerase activity. As a component of the minor spliceosome, involved in the splicing of U12-type introns in pre-mRNAs. The protein is Spliceosome-associated protein CWC27 homolog of Pongo abelii (Sumatran orangutan).